The chain runs to 707 residues: Elongation factor G (707 aa).

The tr-type G domain maps to 8 to 294 (ERYRNFGIIA…GVVDYLPSPL (287 aa)). Residues 17–24 (AHIDAGKT), 92–96 (DTPGH), and 146–149 (NKMD) each bind GTP.

This sequence belongs to the TRAFAC class translation factor GTPase superfamily. Classic translation factor GTPase family. EF-G/EF-2 subfamily.

It is found in the cytoplasm. Its function is as follows. Catalyzes the GTP-dependent ribosomal translocation step during translation elongation. During this step, the ribosome changes from the pre-translocational (PRE) to the post-translocational (POST) state as the newly formed A-site-bound peptidyl-tRNA and P-site-bound deacylated tRNA move to the P and E sites, respectively. Catalyzes the coordinated movement of the two tRNA molecules, the mRNA and conformational changes in the ribosome. In Hyphomonas neptunium (strain ATCC 15444), this protein is Elongation factor G.